A 648-amino-acid polypeptide reads, in one-letter code: RAF proto-oncogene serine/threonine-protein kinase (648 aa).

Serine 29 carries the phosphoserine; by MAPK1 modification. Serine 43 bears the Phosphoserine; by PKA and MAPK1 mark. The RBD domain maps to asparagine 56–leucine 131. The Phorbol-ester/DAG-type zinc finger occupies threonine 138 to cysteine 184. Zn(2+) is bound by residues histidine 139, cysteine 152, cysteine 155, cysteine 165, cysteine 168, histidine 173, cysteine 176, and cysteine 184. Residues glycine 205–methionine 265 are disordered. Serine 233 is subject to Phosphoserine; by PKA. The segment covering threonine 239 to methionine 265 has biased composition (polar residues). Position 252 is a phosphoserine (serine 252). Serine 259 carries the post-translational modification Phosphoserine; by PKA, PKC and PKB/AKT1. Phosphothreonine; by autocatalysis is present on threonine 268. The residue at position 269 (threonine 269) is a Phosphothreonine; by PKA. The segment at isoleucine 281–glutamine 335 is disordered. Positions glutamate 286 to serine 301 are enriched in low complexity. Phosphoserine; by MAPK1 is present on residues serine 289, serine 296, and serine 301. The tract at residues arginine 331–valine 349 is interaction with PEBP1/RKIP. Serine 338 carries the post-translational modification Phosphoserine; by PAK1, PAK2, PAK3 and PAK5. Position 339 is a phosphoserine; by PAK1, PAK2 and PAK3 (serine 339). Phosphotyrosine; by SRC is present on residues tyrosine 340 and tyrosine 341. In terms of domain architecture, Protein kinase spans valine 349–leucine 609. ATP is bound by residues isoleucine 355 to valine 363 and lysine 375. Aspartate 468 (proton acceptor) is an active-site residue. Position 471 is a phosphoserine (serine 471). Position 491 is a phosphothreonine (threonine 491). Serine 494 carries the phosphoserine modification. Phosphoserine; by PKC occurs at positions 497 and 499. Symmetric dimethylarginine; by PRMT5 is present on arginine 563. Serine 621 is subject to Phosphoserine. A Phosphoserine; by MAPK1 modification is found at serine 642.

It belongs to the protein kinase superfamily. TKL Ser/Thr protein kinase family. RAF subfamily. As to quaternary structure, monomer. Homodimer. Heterodimerizes with BRAF and this heterodimer possesses a highly increased kinase activity compared to the respective homodimers or monomers. Heterodimerization is mitogen-regulated and enhanced by 14-3-3 proteins. MAPK1/ERK2 activation can induce a negative feedback that promotes the dissociation of the heterodimer. Forms a multiprotein complex with Ras (M-Ras/MRAS), SHOC2 and protein phosphatase 1 (PPP1CA, PPP1CB and PPP1CC). Interacts with LZTR1. Interacts with Ras proteins; the interaction is antagonized by RIN1. Weakly interacts with RIT1. Interacts (via N-terminus) with RGS14 (via RBD domains); the interaction mediates the formation of a ternary complex with BRAF, a ternary complex inhibited by GNAI1. Probably forms a complex composed of chaperones HSP90 and HSP70, co-chaperones CDC37, PPP5C, TSC1 and client protein TSC2, CDK4, AKT, RAF1 and NR3C1; this complex does not contain co-chaperones STIP1/HOP and PTGES3/p23. Interacts with STK3/MST2; the interaction inhibits its pro-apoptotic activity. Interacts (when phosphorylated at Ser-259) with YWHAZ (unphosphorylated at 'Thr-232'). Interacts with MAP2K1/MEK1 and MAP2K2/MEK2. Interacts with MAP3K5/ASF1 (via N-terminus) and this interaction inhibits the proapoptotic function of MAP3K5/ASK1. Interacts with PAK1 (via kinase domain). The Ser-338 and Ser-339 phosphorylated form (by PAK1) interacts with BCL2. Interacts with PEBP1/RKIP and this interaction is enhanced if RAF1 is phosphorylated on residues Ser-338, Ser-339, Tyr-340 and Tyr-341. Interacts with ADCY2, ADCY5, ADCY6, DGKH, RCAN1/DSCR1, PPP1R12A, PKB/AKT1, SPRY2, SPRY4, CNKSR1/CNK1, KSR2 and PHB/prohibitin. The phosphorylated form interacts with PIN1. Interacts with PPP2CA, PPP2R1B and ROCK2. In its active form, interacts with PRMT5. Interacts with FAM83B; displaces 14-3-3 proteins from RAF1 and activates RAF1. Interacts with PDE8A; the interaction promotes RAF1 activity. Interacts with MFHAS1. Interacts with GLS. Interacts with NEK10 and MAP2K1; the interaction is direct with NEK10 and required for ERK1/2-signaling pathway activation in response to UV irradiation. Zn(2+) is required as a cofactor. In terms of processing, phosphorylation at Thr-269, Ser-338, Tyr-341, Thr-491 and Ser-494 results in its activation. Phosphorylation at Ser-29, Ser-43, Ser-289, Ser-296, Ser-301 and Ser-642 by MAPK1/ERK2 results in its inactivation. Phosphorylation at Ser-259 induces the interaction with YWHAZ and inactivates kinase activity. Dephosphorylation of Ser-259 by the SHOC2-MRAS-PP1c (SMP) complex consisting of SHOC2, GTP-bound M-Ras/MRAS and the catalytic subunit of protein phosphatase 1 (PPP1CA, PPP1CB or PPP1CC); this relieves inactivation and stimulates kinase activity. Phosphorylation at Ser-338 by PAK1 and PAK5 and Ser-339 by PAK1 is required for its mitochondrial localization. Phosphorylation at Ser-621 in response to growth factor treatment stabilizes the protein, possibly by preventing proteasomal degradation. Phosphorylation at Ser-289, Ser-296, Ser-301, Ser-338 and Ser-621 are somehow linked to the methylation potential of cells. Treatment of cells with HGF in the presence of the methylation inhibitor 5'-methylthioadenosine (MTA) results in increased phosphorylation at Ser-338 and Ser-621 and decreased phosphorylation at Ser-296, Ser-301 and Ser-338. Dephosphorylation at Ser-338 by PPP5C results in a decreased of activity. Methylated at Arg-563 in response to EGF treatment. This modification leads to destabilization of the protein, possibly through proteasomal degradation. In terms of tissue distribution, present in all tissues tested: testis, ovary, small intestine, colon, peripheral blood leukocytes, fetal liver, bone marrow, thymus, lymph node and spleen, and the cell lines melanoma G-361, lung carcinoma A-549, colorectal adenocarcinoma SW480, Burkitt's lymphoma Raji and lymphoblastic leukemia MOLT-4. In skeletal muscle, isoform 1 is more abundant than isoform 2.

It is found in the cytoplasm. Its subcellular location is the cell membrane. The protein localises to the mitochondrion. The protein resides in the nucleus. The enzyme catalyses L-seryl-[protein] + ATP = O-phospho-L-seryl-[protein] + ADP + H(+). It catalyses the reaction L-threonyl-[protein] + ATP = O-phospho-L-threonyl-[protein] + ADP + H(+). Its activity is regulated as follows. Regulation is a highly complex process involving membrane recruitment, protein-protein interactions, dimerization, and phosphorylation/dephosphorylation events. Ras-GTP recruits RAF1 to the membrane, thereby promoting its activation. The inactive conformation of RAF1 is maintained by autoinhibitory interactions occurring between the N-terminal regulatory and the C-terminal catalytic domains and by the binding of a 14-3-3 protein that contacts two phosphorylation sites, Ser-259 and Ser-621. Upon mitogenic stimulation, Ras and PPP2R1A cooperate to release autoinhibition and the subsequent phosphorylation of activating sites: Ser-338, Tyr-341, Thr-491, and Ser-494, yields a fully active kinase. Through a negative feedback mechanism involving MAPK1/ERK2, RAF1 is phosphorylated on Ser-29, Ser-43, Ser-289, Ser-296, Ser-301 and Ser-642 by MAPK1/ERK2, which yields an inactive, desensitized kinase. The signaling-competent conformation of RAF1 is finally re-established by the coordinated action of PIN1, a prolyl isomerase that converts pSer and pThr residues from the cis to the trans conformation, which is preferentially recognized and dephosphorylated by PPP2R1A. Activated by homodimerization and heterodimerization (with BRAF). Also regulated through association with other proteins such as KSR2, CNKSR1/CNK1, PEBP1/RKIP, PHB/prohibitin and SPRY4. PEBP1/RKIP acts by dissociating RAF1 from its substrates MAP2K1/MEK1 and MAP2K2/MEK2. PHB/prohibitin facilitates the displacement of 14-3-3 from RAF1 by activated Ras, thereby promoting cell membrane localization and phosphorylation of RAF1 at the activating Ser-338. SPRY4 inhibits Ras-independent, but not Ras-dependent, activation of RAF1. CNKSR1/CNK1 regulates Src-mediated RAF1 activation. Serine/threonine-protein kinase that acts as a regulatory link between the membrane-associated Ras GTPases and the MAPK/ERK cascade, and this critical regulatory link functions as a switch determining cell fate decisions including proliferation, differentiation, apoptosis, survival and oncogenic transformation. RAF1 activation initiates a mitogen-activated protein kinase (MAPK) cascade that comprises a sequential phosphorylation of the dual-specific MAPK kinases (MAP2K1/MEK1 and MAP2K2/MEK2) and the extracellular signal-regulated kinases (MAPK3/ERK1 and MAPK1/ERK2). The phosphorylated form of RAF1 (on residues Ser-338 and Ser-339, by PAK1) phosphorylates BAD/Bcl2-antagonist of cell death at 'Ser-75'. Phosphorylates adenylyl cyclases: ADCY2, ADCY5 and ADCY6, resulting in their activation. Phosphorylates PPP1R12A resulting in inhibition of the phosphatase activity. Phosphorylates TNNT2/cardiac muscle troponin T. Can promote NF-kB activation and inhibit signal transducers involved in motility (ROCK2), apoptosis (MAP3K5/ASK1 and STK3/MST2), proliferation and angiogenesis (RB1). Can protect cells from apoptosis also by translocating to the mitochondria where it binds BCL2 and displaces BAD/Bcl2-antagonist of cell death. Plays a role in the oncogenic transformation of epithelial cells via repression of the TJ protein, occludin (OCLN) by inducing the up-regulation of a transcriptional repressor SNAI2/SLUG, which induces down-regulation of OCLN. Restricts caspase activation in response to selected stimuli, notably Fas stimulation, pathogen-mediated macrophage apoptosis, and erythroid differentiation. Regulates Rho signaling and migration, and is required for normal wound healing. The protein is RAF proto-oncogene serine/threonine-protein kinase (Raf1) of Mus musculus (Mouse).